Consider the following 343-residue polypeptide: LRP2-binding protein (343 aa).

Residues 58–91 form a TPR repeat; the sequence is SQATFLLGQLHYVQGCYAEAELIFDRIKDKDPQA. 6 Sel1-like repeats span residues 92–124, 132–167, 172–205, 206–241, 242–273, and 293–328; these read LYQL…FWDS, YAAL…DNGN, VKAQ…GNGS, LESQ…ERGS, VYAQ…EYKD, and AIGM…RIDP.

It is found in the cytoplasm. Its function is as follows. May act as an adapter that regulates LRP2 function. The polypeptide is LRP2-binding protein (lrp2bp) (Danio rerio (Zebrafish)).